Reading from the N-terminus, the 747-residue chain is E3 UFM1-protein ligase 1 homolog (747 aa).

Residues 403–468 are disordered; it reads EKKKQCGSKA…GTVQVNSEEL (66 aa). Positions 429–438 are enriched in basic residues; that stretch reads GGKGGKKGGK. Over residues 439–449 the composition is skewed to gly residues; that stretch reads GGKNGGGGGKG. The segment covering 450–465 has biased composition (polar residues); that stretch reads ATSSVPTGSGTVQVNS.

It belongs to the UFL1 family.

Functionally, E3 UFM1-protein ligase that mediates ufmylation of target proteins. This is E3 UFM1-protein ligase 1 homolog (ufl-1) from Caenorhabditis briggsae.